Reading from the N-terminus, the 32-residue chain is MSDINATRLPIFWFIYFPCVSDVDSTLTRGER.

The propeptide occupies methionine 1 to proline 10. Residues isoleucine 11–proline 18 constitute a cross-link (cyclopeptide (Ile-Pro)). Residues cysteine 19 to arginine 32 constitute a propeptide that is removed on maturation.

This sequence belongs to the MSDIN fungal toxin family. Processed by the macrocyclase-peptidase enzyme POPB to yield a toxic cyclic octapeptide. POPB first removes 10 residues from the N-terminus. Conformational trapping of the remaining peptide forces the enzyme to release this intermediate rather than proceed to macrocyclization. The enzyme rebinds the remaining peptide in a different conformation and catalyzes macrocyclization of the N-terminal 8 residues. Expressed in basidiocarps.

Probable toxin that belongs to the MSDIN-like toxin family responsible for a large number of food poisoning cases and deaths. This chain is MSDIN-like toxin proprotein 1, found in Amanita exitialis (Guangzhou destroying angel).